Consider the following 239-residue polypeptide: Ribosomal RNA small subunit methyltransferase G (239 aa).

Residues Gly78, Phe83, 129-130 (AE), and Arg148 each bind S-adenosyl-L-methionine.

It belongs to the methyltransferase superfamily. RNA methyltransferase RsmG family.

The protein resides in the cytoplasm. In terms of biological role, specifically methylates the N7 position of a guanine in 16S rRNA. The chain is Ribosomal RNA small subunit methyltransferase G from Clostridium beijerinckii (strain ATCC 51743 / NCIMB 8052) (Clostridium acetobutylicum).